Here is a 435-residue protein sequence, read N- to C-terminus: Glutamyl-tRNA reductase (435 aa).

Residues 49–52 (TCNR), serine 109, 114–116 (ETQ), and glutamine 120 contribute to the substrate site. The active-site Nucleophile is cysteine 50. 189 to 194 (GAGEMS) provides a ligand contact to NADP(+).

This sequence belongs to the glutamyl-tRNA reductase family. As to quaternary structure, homodimer.

It carries out the reaction (S)-4-amino-5-oxopentanoate + tRNA(Glu) + NADP(+) = L-glutamyl-tRNA(Glu) + NADPH + H(+). Its pathway is porphyrin-containing compound metabolism; protoporphyrin-IX biosynthesis; 5-aminolevulinate from L-glutamyl-tRNA(Glu): step 1/2. Catalyzes the NADPH-dependent reduction of glutamyl-tRNA(Glu) to glutamate 1-semialdehyde (GSA). The protein is Glutamyl-tRNA reductase of Listeria monocytogenes serotype 4b (strain CLIP80459).